The sequence spans 520 residues: Protein RCC2 (520 aa).

The tract at residues 1–78 (MPRKKGAAWE…RPATAGKAAG (78 aa)) is disordered. Ser-14 is subject to Phosphoserine. Thr-18 is modified (phosphothreonine). Positions 22-34 (GPRRRGGPAGRKR) are enriched in basic residues. A phosphoserine mark is found at Ser-41, Ser-42, Ser-43, Ser-44, Ser-48, and Ser-49. Over residues 69–78 (RPATAGKAAG) the composition is skewed to low complexity. N6-acetyllysine is present on residues Lys-90 and Lys-122. 7 RCC1 repeats span residues 101-163 (KGQL…SLLI), 166-217 (EGKL…ALTD), 219-269 (GSVF…LMDC), 271-345 (GNLY…VLDS), 346-399 (QKRV…AVSE), 401-445 (GGLF…VAAD), and 446-499 (ESTI…VIAR). Lys-291 carries the N6-acetyllysine modification. The interval 316-323 (KTKDGQIL) is required for interaction with RAC1. The residue at position 340 (Thr-340) is a Phosphothreonine. Lys-375 is modified (N6-acetyllysine).

In terms of assembly, interacts with RAC1. Interacts with nucleotide-free and with GDP and GTP-bound forms of RAC1, with a slight preference for GDP-bound RAC1. Binds preferentially to the nucleotide-free form of RAC1. Interacts with CORO1C. Interacts with microtubules.

The protein resides in the nucleus. It localises to the nucleolus. Its subcellular location is the cytoplasm. It is found in the cytoskeleton. The protein localises to the chromosome. The protein resides in the centromere. It localises to the spindle. Its subcellular location is the midbody. It is found in the cell membrane. Functionally, multifunctional protein that may affect its functions by regulating the activity of small GTPases, such as RAC1 and RALA. Required for normal progress through the cell cycle, both during interphase and during mitosis. Required for the presence of normal levels of MAD2L1, AURKB and BIRC5 on inner centromeres during mitosis, and for normal attachment of kinetochores to mitotic spindles. Required for normal organization of the microtubule cytoskeleton in interphase cells. Functions as a guanine nucleotide exchange factor (GEF) for RALA. Interferes with the activation of RAC1 by guanine nucleotide exchange factors. Prevents accumulation of active, GTP-bound RAC1, and suppresses RAC1-mediated reorganization of the actin cytoskeleton and formation of membrane protrusions. Required for normal cellular responses to contacts with the extracellular matrix of adjacent cells, and for directional cell migration in response to a fibronectin gradient (in vitro). The sequence is that of Protein RCC2 (Rcc2) from Mus musculus (Mouse).